The following is a 116-amino-acid chain: NADH dehydrogenase [ubiquinone] iron-sulfur protein 6, mitochondrial (116 aa).

A mitochondrion-targeting transit peptide spans 1–20 (MAAVLTFRRLLTLPRAARGF). An N6-acetyllysine mark is found at Lys-90 and Lys-112.

This sequence belongs to the complex I NDUFS6 subunit family. As to quaternary structure, mammalian complex I is composed of 45 different subunits. This is a component of the iron-sulfur (IP) fragment of the enzyme.

The protein localises to the mitochondrion inner membrane. Its function is as follows. Accessory subunit of the mitochondrial membrane respiratory chain NADH dehydrogenase (Complex I), that is believed not to be involved in catalysis. Complex I functions in the transfer of electrons from NADH to the respiratory chain. The immediate electron acceptor for the enzyme is believed to be ubiquinone. This is NADH dehydrogenase [ubiquinone] iron-sulfur protein 6, mitochondrial (Ndufs6) from Mus musculus (Mouse).